Here is a 274-residue protein sequence, read N- to C-terminus: Orotidine 5'-phosphate decarboxylase (274 aa).

The active-site Proton donor is Lys-95.

It belongs to the OMP decarboxylase family. Type 2 subfamily.

The enzyme catalyses orotidine 5'-phosphate + H(+) = UMP + CO2. Its pathway is pyrimidine metabolism; UMP biosynthesis via de novo pathway; UMP from orotate: step 2/2. The chain is Orotidine 5'-phosphate decarboxylase from Mycolicibacterium paratuberculosis (strain ATCC BAA-968 / K-10) (Mycobacterium paratuberculosis).